Reading from the N-terminus, the 344-residue chain is Biotin synthase (344 aa).

The Radical SAM core domain occupies 40–267 (AEVQVSTLLS…KSMVRLSAGR (228 aa)). [4Fe-4S] cluster-binding residues include Cys-55, Cys-59, and Cys-62. Positions 99, 130, 190, and 262 each coordinate [2Fe-2S] cluster.

This sequence belongs to the radical SAM superfamily. Biotin synthase family. Homodimer. [4Fe-4S] cluster is required as a cofactor. It depends on [2Fe-2S] cluster as a cofactor.

The catalysed reaction is (4R,5S)-dethiobiotin + (sulfur carrier)-SH + 2 reduced [2Fe-2S]-[ferredoxin] + 2 S-adenosyl-L-methionine = (sulfur carrier)-H + biotin + 2 5'-deoxyadenosine + 2 L-methionine + 2 oxidized [2Fe-2S]-[ferredoxin]. It participates in cofactor biosynthesis; biotin biosynthesis; biotin from 7,8-diaminononanoate: step 2/2. Catalyzes the conversion of dethiobiotin (DTB) to biotin by the insertion of a sulfur atom into dethiobiotin via a radical-based mechanism. This chain is Biotin synthase, found in Xanthomonas oryzae pv. oryzae (strain PXO99A).